The sequence spans 307 residues: Serine/threonine-protein phosphatase 4 catalytic subunit (307 aa).

N-acetylalanine is present on A2. Residues D54, H56, D82, and N114 each contribute to the Mn(2+) site. H115 serves as the catalytic Proton donor. Positions 164 and 238 each coordinate Mn(2+). Residue L307 is modified to Leucine methyl ester.

Belongs to the PPP phosphatase family. PP-4 (PP-X) subfamily. As to quaternary structure, serine/threonine-protein phosphatase 4 (PP4) occurs in different assemblies of the catalytic and one or more regulatory subunits. Component of the PP4 complexes PPP4C-PPP4R1, PPP4C-PPP4R2, PPP4C-PPP4R2-PPP4R3A, PPP4C-PPP4R2-PPP4R3B and PPP4C-PPP4R4. The PPP4C-PPP4R2 complex appears to be a tetramer composed of 2 molecules of PPP4C and 2 molecules of PPP4R2. Interacts with REL, NFKB1/p50 and RELA. Interacts with SMN1 and GEMIN4. Interacts with IRS4 (phosphorylated). Interacts with SMEK1/PPP4R3A; the interaction requires PP4R2. Interacts with HDAC3. Requires Mn(2+) as cofactor. In terms of processing, methylation at the C-terminal Leu-307 is critical for interactions with regulatory subunits and functions in DNA repair.

The protein resides in the cytoplasm. Its subcellular location is the nucleus. It is found in the cytoskeleton. It localises to the microtubule organizing center. The protein localises to the centrosome. The enzyme catalyses O-phospho-L-seryl-[protein] + H2O = L-seryl-[protein] + phosphate. It catalyses the reaction O-phospho-L-threonyl-[protein] + H2O = L-threonyl-[protein] + phosphate. Its function is as follows. Protein phosphatase that is involved in many processes such as microtubule organization at centrosomes, maturation of spliceosomal snRNPs, apoptosis, DNA repair, tumor necrosis factor (TNF)-alpha signaling, activation of c-Jun N-terminal kinase MAPK8, regulation of histone acetylation, DNA damage checkpoint signaling, NF-kappa-B activation and cell migration. The PPP4C-PPP4R1 PP4 complex may play a role in dephosphorylation and regulation of HDAC3. The PPP4C-PPP4R2-PPP4R3A PP4 complex specifically dephosphorylates H2AX phosphorylated on Ser-140 (gamma-H2AX) generated during DNA replication and required for DNA double strand break repair. Dephosphorylates NDEL1 at CDK1 phosphorylation sites and negatively regulates CDK1 activity in interphase. In response to DNA damage, catalyzes RPA2 dephosphorylation, an essential step for DNA repair since it allows the efficient RPA2-mediated recruitment of RAD51 to chromatin. This Homo sapiens (Human) protein is Serine/threonine-protein phosphatase 4 catalytic subunit (PPP4C).